A 359-amino-acid polypeptide reads, in one-letter code: tRNA-specific 2-thiouridylase MnmA (359 aa).

Residues 7–14 (AMSGGVDS) and M33 contribute to the ATP site. Catalysis depends on C101, which acts as the Nucleophile. C101 and C198 form a disulfide bridge. Residue G125 coordinates ATP. Positions 148-150 (KDQ) are interaction with tRNA. Catalysis depends on C198, which acts as the Cysteine persulfide intermediate.

It belongs to the MnmA/TRMU family.

It is found in the cytoplasm. It carries out the reaction S-sulfanyl-L-cysteinyl-[protein] + uridine(34) in tRNA + AH2 + ATP = 2-thiouridine(34) in tRNA + L-cysteinyl-[protein] + A + AMP + diphosphate + H(+). Its function is as follows. Catalyzes the 2-thiolation of uridine at the wobble position (U34) of tRNA, leading to the formation of s(2)U34. This Chloroflexus aggregans (strain MD-66 / DSM 9485) protein is tRNA-specific 2-thiouridylase MnmA.